The following is a 184-amino-acid chain: Ribosome-recycling factor (184 aa).

This sequence belongs to the RRF family.

The protein localises to the cytoplasm. Functionally, responsible for the release of ribosomes from messenger RNA at the termination of protein biosynthesis. May increase the efficiency of translation by recycling ribosomes from one round of translation to another. The sequence is that of Ribosome-recycling factor from Borrelia turicatae (strain 91E135).